Consider the following 153-residue polypeptide: MLKTIKIFSDGSCLGNPGPGGYSFIIQHLEYENISSSGFYLTTNNRMELMGIIVATESLKQPCCITISTDSQYVQKGILYWIKNWKTKGWKTSRKTYVKNVDLWLRLEKSLNLHQVTWKWIKSHSGNKKNEQCDHLARESAKFPTLKDFGYIL.

The 142-residue stretch at 1 to 142 (MLKTIKIFSD…CDHLARESAK (142 aa)) folds into the RNase H type-1 domain. Positions 10, 48, 70, and 134 each coordinate Mg(2+).

This sequence belongs to the RNase H family. As to quaternary structure, monomer. The cofactor is Mg(2+).

Its subcellular location is the cytoplasm. The enzyme catalyses Endonucleolytic cleavage to 5'-phosphomonoester.. Its function is as follows. Endonuclease that specifically degrades the RNA of RNA-DNA hybrids. The polypeptide is Ribonuclease H (Buchnera aphidicola subsp. Baizongia pistaciae (strain Bp)).